The following is a 191-amino-acid chain: ATP-dependent Clp protease proteolytic subunit 1 (191 aa).

The Nucleophile role is filled by serine 91. Residue histidine 116 is part of the active site.

This sequence belongs to the peptidase S14 family. As to quaternary structure, fourteen ClpP subunits assemble into 2 heptameric rings which stack back to back to give a disk-like structure with a central cavity, resembling the structure of eukaryotic proteasomes.

It is found in the cytoplasm. The catalysed reaction is Hydrolysis of proteins to small peptides in the presence of ATP and magnesium. alpha-casein is the usual test substrate. In the absence of ATP, only oligopeptides shorter than five residues are hydrolyzed (such as succinyl-Leu-Tyr-|-NHMec, and Leu-Tyr-Leu-|-Tyr-Trp, in which cleavage of the -Tyr-|-Leu- and -Tyr-|-Trp bonds also occurs).. Its function is as follows. Cleaves peptides in various proteins in a process that requires ATP hydrolysis. Has a chymotrypsin-like activity. Plays a major role in the degradation of misfolded proteins. The protein is ATP-dependent Clp protease proteolytic subunit 1 of Chlamydia pneumoniae (Chlamydophila pneumoniae).